Consider the following 370-residue polypeptide: Mitochondrial distribution and morphology protein 10 (370 aa).

Belongs to the MDM10 family. Component of the ER-mitochondria encounter structure (ERMES) or MDM complex, composed of mmm1, mdm10, mdm12 and mdm34. Associates with the mitochondrial outer membrane sorting assembly machinery SAM(core) complex.

It is found in the mitochondrion outer membrane. Its function is as follows. Component of the ERMES/MDM complex, which serves as a molecular tether to connect the endoplasmic reticulum and mitochondria. Components of this complex are involved in the control of mitochondrial shape and protein biogenesis and may function in phospholipid exchange. mdm10 is involved in the late assembly steps of the general translocase of the mitochondrial outer membrane (TOM complex). Functions in the tom40-specific route of the assembly of outer membrane beta-barrel proteins, including the association of tom40 with the receptor tom22 and small TOM proteins. Can associate with the SAM(core) complex as well as the mdm12-mmm1 complex, both involved in late steps of the major beta-barrel assembly pathway, that is responsible for biogenesis of all outer membrane beta-barrel proteins. May act as a switch that shuttles between both complexes and channels precursor proteins into the tom40-specific pathway. Plays a role in mitochondrial morphology and in the inheritance of mitochondria. In Schizosaccharomyces pombe (strain 972 / ATCC 24843) (Fission yeast), this protein is Mitochondrial distribution and morphology protein 10 (mdm10).